We begin with the raw amino-acid sequence, 700 residues long: MQSALTPNTAAFLEYISPGHAPTSAPPAALFNNMPVPGRDTPEDTPPSVSNGSQPSAHQAPSDDSDSPTPEMPPAQPDDAANTDPLAGNGANKRKAGRPSAVLDDDDDDASDSDLPSGHEDKKQHGAGRAAAASASGSGRRGRKSGGGEGDGKRELSKSERRKEQNRAAQKAFRERREAKVKDLEDKVAELENKAYGTQIENENLRGILKRLQEENVALKQSAFTFSMPVNSRNSPNSNNGSFSAPAPQNRKPLTPPQSSNDDSLKAVDDIPMLPHRHSSANTISDNSSESLVSLRSTDRTPPALFSDHFNTYALGVVPVPPPSSSSQPTQKYPSASNGQQSISSNSNSSNVISPPSADQSEFNALWESLYPNDVENLVSQNASQNQGGPFTLLNSQPDSMSFASAGNNNSMNALFNFGAPSSPSISNSAQPSVNPAPASVTQPANHITQNLGATGQASDWNRFAFREPTAEASAPNWDLTDNSVNEFLASLSGDTTADATANDYLNNDDEAFNAQLRKIFGNDNSPSAAFNLPSTSFSPNNYLNMSPSPMMPLSNSQSPQSSDSRSNTNVSSGRGNDISMADSPEYSMGSSRTSVSHDSTDLQGKATTTTTTAIRSAKNYSCKSDNEVIHVVDEKGRVIKPSELWMRFGMQHENSTEHLLIDDLCDQMRAKATCKDGKMQLDITDAAVLFRRGERRPSQ.

Disordered stretches follow at residues 17-185 and 228-296; these read SPGH…KDLE and MPVN…VSLR. The short motif at 34–41 is the Bipartite nuclear localization signal element; that stretch reads MPVPGRDT. The span at 47–59 shows a compositional bias: polar residues; sequence PSVSNGSQPSAHQ. A Bipartite nuclear localization signal motif is present at residues 67–74; it reads SPTPEMPP. The span at 103-112 shows a compositional bias: acidic residues; it reads LDDDDDDASD. The span at 127 to 138 shows a compositional bias: low complexity; sequence AGRAAAASASGS. The span at 150 to 185 shows a compositional bias: basic and acidic residues; the sequence is GDGKRELSKSERRKEQNRAAQKAFRERREAKVKDLE. The 64-residue stretch at 156-219 folds into the bZIP domain; the sequence is LSKSERRKEQ…KRLQEENVAL (64 aa). The segment at 158 to 182 is basic motif; it reads KSERRKEQNRAAQKAFRERREAKVK. Residues 184 to 191 are leucine-zipper; that stretch reads LEDKVAEL. 2 transcription activation regions span residues 213–400 and 452–577; these read QEEN…QPDS and LGAT…GRGN. Residues 231-244 are compositionally biased toward low complexity; it reads NSRNSPNSNNGSFS. Polar residues predominate over residues 280–296; that stretch reads SANTISDNSSESLVSLR. Positions 306-318 are n-CRD; it reads FSDHFNTYALGVV. Disordered regions lie at residues 320–359 and 542–609; these read VPPPSSSSQPTQKYPSASNGQQSISSNSNSSNVISPPSAD and NYLN…KATT. 2 stretches are compositionally biased toward low complexity: residues 335 to 358 and 542 to 573; these read SASNGQQSISSNSNSSNVISPPSA and NYLNMSPSPMMPLSNSQSPQSSDSRSNTNVSS. Polar residues predominate over residues 589–607; it reads MGSSRTSVSHDSTDLQGKA. The segment at 642 to 675 is c-CRD; the sequence is PSELWMRFGMQHENSTEHLLIDDLCDQMRAKATC. Residues 660-667 carry the Nuclear export signal motif; sequence LLIDDLCD. Residues Cys666 and Cys675 are joined by a disulfide bond.

It belongs to the bZIP family. YAP subfamily. In terms of processing, depending on the oxidative stress inducing agent, yap1 can undergo two distinct conformational changes, both involving disulfide bond formation, and both masking the nuclear export signal, thus abolishing nuclear export.

It is found in the nucleus. The protein resides in the cytoplasm. Its function is as follows. Transcription activator involved in oxidative stress response and redox homeostasis. Regulates the transcription of genes encoding antioxidant enzymes and components of the cellular thiol-reducing pathways. Involved in antifungal resistance to fluconazole. This chain is AP-1-like transcription factor yap1, found in Cryptococcus neoformans var. grubii serotype A (strain H99 / ATCC 208821 / CBS 10515 / FGSC 9487) (Filobasidiella neoformans var. grubii).